A 1278-amino-acid chain; its full sequence is Dynactin subunit 1 (1278 aa).

The tract at residues 1 to 25 (MAQSKRHVYSRTPSGSRMSAEASAR) is disordered. The region spanning 48-90 (GATLFATGKWVGVILDEAKGKNDGTVQGRKYFTCDEGHGIFVR) is the CAP-Gly domain. The interval 100 to 223 (GADTTSPETP…SKEEEGLRAQ (124 aa)) is disordered. Positions 102 to 114 (DTTSPETPDSSAS) are enriched in polar residues. Position 108 is a phosphothreonine (T108). Residues 129 to 152 (SKLRGLKPKKAPTARKTTTRRPKP) show a composition bias toward basic residues. Phosphothreonine; by SLK is present on residues T145, T146, and T147. A compositionally biased stretch (low complexity) spans 161 to 184 (AGASSSLGPSGSASAGELSSSEPS). S179 is subject to Phosphoserine; by PLK1. Position 212 is a phosphoserine; by CDK1 (S212). Coiled coils occupy residues 213–547 (PSKE…RQQQ), 943–1049 (LKLE…EGLR), and 1182–1211 (SAQL…KETV). A compositionally biased stretch (basic and acidic residues) spans 214-223 (SKEEEGLRAQ). The tract at residues 911 to 1278 (EYDAERPPSK…LHQLHSRLIS (368 aa)) is interaction with HPS6.

Belongs to the dynactin 150 kDa subunit family. Monomer and homodimer. Subunit of dynactin, a multiprotein complex part of a tripartite complex with dynein and a adapter, such as BICDL1, BICD2 or HOOK3. The dynactin complex is built around ACTR1A/ACTB filament and consists of an actin-related filament composed of a shoulder domain, a pointed end and a barbed end. Its length is defined by its flexible shoulder domain. The soulder is composed of 2 DCTN1 subunits, 4 DCTN2 and 2 DCTN3. DCTN1/p150(glued) binds directly to microtubules and to cytoplasmic dynein. The 4 DCNT2 (via N-terminus) bind the ACTR1A filament and act as molecular rulers to determine the length. The pointed end is important for binding dynein-dynactin cargo adapters. Consists of 4 subunits: ACTR10, DCNT4, DCTN5 and DCTN6. The barbed end is composed of a CAPZA1:CAPZB heterodimers, which binds ACTR1A/ACTB filament and dynactin and stabilizes dynactin. Interacts with the C-terminus of MAPRE1, MAPRE2 and MAPRE3. Interacts (via C-terminus) with SNX6. Interacts with CLN3, DYNAP, ECPAS and FBXL5. Interacts with MISP; this interaction regulates its distribution at the cell cortex. Interacts with CEP131. Interacts with CEP126. Interacts with CLIP1. Interacts with dynein intermediate chain and dynein heavy chain. Interacts with PLK1 (via POLO-box domain). Interacts with TBCB. Binds preferentially to tyrosinated microtubules than to detyrosinated microtubules. Interacts with PARD6A. Interacts with HPS6. Interacts with KIF3A. Interacts with BICD2. Interacts with DST (isoform 9). Interacts with DST (isoform 1). Identified in a complex with MREG and RILP. Interacts with BCCIP (isoform 2/alpha). Interacts with DCDC1. Interacts with AKNA. Interacts with DYNC1I2. Interacts with RUFY3 and RUFY4. Ubiquitinated by a SCF complex containing FBXL5, leading to its degradation by the proteasome. In terms of processing, phosphorylation by SLK at Thr-145, Thr-146 and Thr-147 targets DCTN1 to the centrosome. It is uncertain if SLK phosphorylates all three threonines or one or two of them. PLK1-mediated phosphorylation at Ser-179 is essential for its localization in the nuclear envelope, promotes its dissociation from microtubules during early mitosis and positively regulates nuclear envelope breakdown during prophase. Brain.

It localises to the cytoplasm. It is found in the cytoskeleton. Its subcellular location is the microtubule organizing center. The protein localises to the centrosome. The protein resides in the centriole. It localises to the spindle. It is found in the nucleus envelope. Its subcellular location is the cell cortex. Its function is as follows. Part of the dynactin complex that activates the molecular motor dynein for ultra-processive transport along microtubules. Plays a key role in dynein-mediated retrograde transport of vesicles and organelles along microtubules by recruiting and tethering dynein to microtubules. Binds to both dynein and microtubules providing a link between specific cargos, microtubules and dynein. Essential for targeting dynein to microtubule plus ends, recruiting dynein to membranous cargos and enhancing dynein processivity (the ability to move along a microtubule for a long distance without falling off the track). Can also act as a brake to slow the dynein motor during motility along the microtubule. Can regulate microtubule stability by promoting microtubule formation, nucleation and polymerization and by inhibiting microtubule catastrophe in neurons. Inhibits microtubule catastrophe by binding both to microtubules and to tubulin, leading to enhanced microtubule stability along the axon. Plays a role in metaphase spindle orientation. Plays a role in centriole cohesion and subdistal appendage organization and function. Its recruitment to the centriole in a KIF3A-dependent manner is essential for the maintenance of centriole cohesion and the formation of subdistal appendage. Also required for microtubule anchoring at the mother centriole. Plays a role in primary cilia formation. This is Dynactin subunit 1 from Homo sapiens (Human).